Reading from the N-terminus, the 216-residue chain is Cytochrome c biogenesis ATP-binding export protein CcmA (216 aa).

The ABC transporter domain maps to 5 to 216 (ISVDTLLSAS…RKIRLDYRFV (212 aa)). 43–50 (GPNGAGKT) is an ATP binding site.

It belongs to the ABC transporter superfamily. CcmA exporter (TC 3.A.1.107) family. As to quaternary structure, the complex is composed of two ATP-binding proteins (CcmA) and two transmembrane proteins (CcmB).

It localises to the cell inner membrane. It carries out the reaction heme b(in) + ATP + H2O = heme b(out) + ADP + phosphate + H(+). Functionally, part of the ABC transporter complex CcmAB involved in the biogenesis of c-type cytochromes; once thought to export heme, this seems not to be the case, but its exact role is uncertain. Responsible for energy coupling to the transport system. The protein is Cytochrome c biogenesis ATP-binding export protein CcmA of Shewanella oneidensis (strain ATCC 700550 / JCM 31522 / CIP 106686 / LMG 19005 / NCIMB 14063 / MR-1).